Reading from the N-terminus, the 153-residue chain is Large ribosomal subunit protein uL15 (153 aa).

The segment at 15–42 is disordered; that stretch reads ARRIVGRGSSSGRGTTSGRGTKGQQARA. A compositionally biased stretch (gly residues) spans 23-35; the sequence is SSSGRGTTSGRGT.

This sequence belongs to the universal ribosomal protein uL15 family. As to quaternary structure, part of the 50S ribosomal subunit.

Binds to the 23S rRNA. This is Large ribosomal subunit protein uL15 from Treponema pallidum (strain Nichols).